The chain runs to 420 residues: MSRSSPSGKGHSRMAEPRFNNPYFWPPPPTMPSQLDNLVLINKIKEQLMAEKIRPPHLPPTSASSQQPLLVPPAPAESSQAVMSLPKLQQVPGLHPQAVPQPDVALHARPATSTVTGLGLSTRTPSVSTSESSAGAGTGTGTSTPSTPTTTSQSRLIASSPTLISGITSPPLLDSIKTIQGHGLLGPPKSERGRKKIKAENPGGPPVLVVPYPILASGETAKEGKTYRCKVCPLTFFTKSEMQIHSKSHTEAKPHKCPHCSKSFANASYLAQHLRIHLGVKPYHCSYCDKSFRQLSHLQQHTRIHTGDRPYKCPHPGCEKAFTQLSNLQSHQRQHNKDKPYKCPNCYRAYSDSASLQIHLSAHAIKHAKAYCCSMCGRAYTSETYLMKHMSKHTVVEHLVSHHSPQRTESPGIPVRISLI.

Disordered stretches follow at residues 1 to 28, 54 to 80, and 115 to 155; these read MSRSSPSGKGHSRMAEPRFNNPYFWPPP, RPPHLPPTSASSQQPLLVPPAPAESSQ, and VTGL…SQSR. Low complexity predominate over residues 121–154; that stretch reads STRTPSVSTSESSAGAGTGTGTSTPSTPTTTSQS. Threonine 162 bears the Phosphothreonine mark. The disordered stretch occupies residues 178–202; sequence TIQGHGLLGPPKSERGRKKIKAENP. Lysine 198 is covalently cross-linked (Glycyl lysine isopeptide (Lys-Gly) (interchain with G-Cter in SUMO2)). 6 consecutive C2H2-type zinc fingers follow at residues 227 to 249, 255 to 277, 283 to 305, 311 to 335, 341 to 363, and 371 to 393; these read YRCKVCPLTFFTKSEMQIHSKSH, HKCPHCSKSFANASYLAQHLRIH, YHCSYCDKSFRQLSHLQQHTRIH, YKCPHPGCEKAFTQLSNLQSHQRQH, YKCPNCYRAYSDSASLQIHLSAH, and YCCSMCGRAYTSETYLMKHMSKH. Serine 404 carries the post-translational modification Phosphoserine.

Belongs to the krueppel C2H2-type zinc-finger protein family.

It localises to the nucleus. Its function is as follows. May be involved in transcriptional regulation. In Homo sapiens (Human), this protein is Zinc finger protein 362 (ZNF362).